The sequence spans 458 residues: Bifunctional protein GlmU (458 aa).

A pyrophosphorylase region spans residues Met-1–Arg-230. Residues Leu-9–Gly-12, Lys-23, Gln-73, and Gly-78–Thr-79 each bind UDP-N-acetyl-alpha-D-glucosamine. Asp-103 contacts Mg(2+). UDP-N-acetyl-alpha-D-glucosamine is bound by residues Gly-140, Glu-155, Asn-170, and Asn-228. A Mg(2+)-binding site is contributed by Asn-228. Residues Val-231 to Asn-251 are linker. The N-acetyltransferase stretch occupies residues Gly-252–Asp-458. The UDP-N-acetyl-alpha-D-glucosamine site is built by Arg-333 and Lys-351. Catalysis depends on His-363, which acts as the Proton acceptor. Tyr-366 and Asn-377 together coordinate UDP-N-acetyl-alpha-D-glucosamine. Residues Asn-386–Tyr-387, Ser-405, Ala-423, and Arg-440 each bind acetyl-CoA.

It in the N-terminal section; belongs to the N-acetylglucosamine-1-phosphate uridyltransferase family. This sequence in the C-terminal section; belongs to the transferase hexapeptide repeat family. As to quaternary structure, homotrimer. It depends on Mg(2+) as a cofactor.

The protein localises to the cytoplasm. It carries out the reaction alpha-D-glucosamine 1-phosphate + acetyl-CoA = N-acetyl-alpha-D-glucosamine 1-phosphate + CoA + H(+). The enzyme catalyses N-acetyl-alpha-D-glucosamine 1-phosphate + UTP + H(+) = UDP-N-acetyl-alpha-D-glucosamine + diphosphate. It participates in nucleotide-sugar biosynthesis; UDP-N-acetyl-alpha-D-glucosamine biosynthesis; N-acetyl-alpha-D-glucosamine 1-phosphate from alpha-D-glucosamine 6-phosphate (route II): step 2/2. It functions in the pathway nucleotide-sugar biosynthesis; UDP-N-acetyl-alpha-D-glucosamine biosynthesis; UDP-N-acetyl-alpha-D-glucosamine from N-acetyl-alpha-D-glucosamine 1-phosphate: step 1/1. The protein operates within bacterial outer membrane biogenesis; LPS lipid A biosynthesis. Its function is as follows. Catalyzes the last two sequential reactions in the de novo biosynthetic pathway for UDP-N-acetylglucosamine (UDP-GlcNAc). The C-terminal domain catalyzes the transfer of acetyl group from acetyl coenzyme A to glucosamine-1-phosphate (GlcN-1-P) to produce N-acetylglucosamine-1-phosphate (GlcNAc-1-P), which is converted into UDP-GlcNAc by the transfer of uridine 5-monophosphate (from uridine 5-triphosphate), a reaction catalyzed by the N-terminal domain. The sequence is that of Bifunctional protein GlmU from Enterococcus faecalis (strain ATCC 700802 / V583).